The primary structure comprises 321 residues: Non-canonical heme oxygenase HOZ, chloroplastic (321 aa).

The transit peptide at 1-45 (MKSLVAHFSTPLITARLVPRCIIHRASISAVSFSTVRRRFSPLTM) directs the protein to the chloroplast. Positions 96–116 (CGMLSTFSQKYEGYPSGSMVD) are dimerization. Residues Ser-130, Val-134, and His-135 each coordinate heme b. Dimerization stretches follow at residues 144 to 166 (KCSL…LHGD) and 205 to 208 (KVVR).

In terms of assembly, homodimer. Binds to heme in the interdimer interface; the heme iron is coordinated by a fixed water molecule.

Its subcellular location is the plastid. It is found in the chloroplast. In terms of biological role, dimeric beta-barrel protein binding to heme and catalyzing its degradation to produce biliverdin. May function in the tetrapyrrole biosynthetic pathway. This is Non-canonical heme oxygenase HOZ, chloroplastic from Arabidopsis thaliana (Mouse-ear cress).